The sequence spans 505 residues: Ion-translocating oxidoreductase complex subunit C (505 aa).

4Fe-4S ferredoxin-type domains follow at residues 381–410 (ELNN…EQLY) and 420–449 (KTQI…MSYY). [4Fe-4S] cluster-binding residues include Cys390, Cys393, Cys396, Cys400, Cys429, Cys432, Cys435, and Cys439.

Belongs to the 4Fe4S bacterial-type ferredoxin family. RnfC subfamily. The complex is composed of six subunits: RnfA, RnfB, RnfC, RnfD, RnfE and RnfG. The cofactor is [4Fe-4S] cluster.

Its subcellular location is the cell inner membrane. In terms of biological role, part of a membrane-bound complex that couples electron transfer with translocation of ions across the membrane. The chain is Ion-translocating oxidoreductase complex subunit C from Buchnera aphidicola subsp. Baizongia pistaciae (strain Bp).